The primary structure comprises 493 residues: Xaa-Pro dipeptidase (493 aa).

At A2 the chain carries N-acetylalanine. At S167 the chain carries Phosphoserine. An a dipeptide-binding site is contributed by H255. The Mn(2+) site is built by D276, D287, and H370. D287 provides a ligand contact to a dipeptide. The a dipeptide site is built by H377 and R398. Residues E412 and E452 each coordinate Mn(2+).

It belongs to the peptidase M24B family. Eukaryotic-type prolidase subfamily. Homodimer. Mn(2+) serves as cofactor.

The enzyme catalyses Xaa-L-Pro dipeptide + H2O = an L-alpha-amino acid + L-proline. In terms of biological role, dipeptidase that catalyzes the hydrolysis of dipeptides with a prolyl (Xaa-Pro) or hydroxyprolyl residue in the C-terminal position. The preferred dipeptide substrate is Gly-Pro, but other Xaa-Pro dipeptides, such as Ala-Pro, Met-Pro, Phe-Pro, Val-Pro and Leu-Pro, can be cleaved. Plays an important role in collagen metabolism because the high level of iminoacids in collagen. This is Xaa-Pro dipeptidase (PEPD) from Pongo abelii (Sumatran orangutan).